Consider the following 99-residue polypeptide: Large ribosomal subunit protein uL23 (99 aa).

This sequence belongs to the universal ribosomal protein uL23 family. Part of the 50S ribosomal subunit. Contacts protein L29, and trigger factor when it is bound to the ribosome.

In terms of biological role, one of the early assembly proteins it binds 23S rRNA. One of the proteins that surrounds the polypeptide exit tunnel on the outside of the ribosome. Forms the main docking site for trigger factor binding to the ribosome. This is Large ribosomal subunit protein uL23 from Haemophilus influenzae (strain 86-028NP).